Reading from the N-terminus, the 406-residue chain is RNA exonuclease 4 (406 aa).

Polar residues predominate over residues 1 to 10 (MAPELSSNWK). 2 disordered regions span residues 1–108 (MAPE…TLPS) and 156–181 (AGLT…PTDL). Low complexity-rich tracts occupy residues 54–64 (SQQQQQASNPS), 72–82 (SQTQSQPSSQK), and 94–108 (SKPT…TLPS). Polar residues predominate over residues 162 to 173 (GHSSSSPKSNKN). The region spanning 216 to 367 (YLSIDCEMVG…EDARVAMLLF (152 aa)) is the Exonuclease domain. Over residues 377–387 (ENSNRYEEGQA) the composition is skewed to basic and acidic residues. Positions 377 to 406 (ENSNRYEEGQAKKGGNGGGGGGGKKKKGKK) are disordered. A compositionally biased stretch (gly residues) spans 388 to 398 (KKGGNGGGGGG).

This sequence belongs to the REXO4 family.

The protein resides in the nucleus. Functionally, exoribonuclease involved in ribosome biosynthesis. Involved in the processing of ITS1, the internal transcribed spacer localized between the 18S and 5.8S rRNAs. This chain is RNA exonuclease 4 (rex-4), found in Neurospora crassa (strain ATCC 24698 / 74-OR23-1A / CBS 708.71 / DSM 1257 / FGSC 987).